The chain runs to 309 residues: RuBisCO operon transcriptional regulator (309 aa).

In terms of domain architecture, HTH lysR-type spans 6–63; sequence ATLHQLKIFAAVARHMSFARAAEELHLTPPALSIQVRQLAEAVGQPLFDQIGKKIYLT. A DNA-binding region (H-T-H motif) is located at residues 23–42; it reads FARAAEELHLTPPALSIQVR.

This sequence belongs to the LysR transcriptional regulatory family.

Functionally, trans-acting transcriptional regulator of RuBisCO genes (rbcL1S1) expression. This is RuBisCO operon transcriptional regulator (rbcR) from Acidithiobacillus ferrooxidans (Thiobacillus ferrooxidans).